A 101-amino-acid chain; its full sequence is NAD(P)H-quinone oxidoreductase subunit 4L, chloroplastic (101 aa).

A run of 3 helical transmembrane segments spans residues 2–22 (YIEN…YGLL), 32–52 (MCLE…SNFI), and 61–81 (VIAI…LALV).

It belongs to the complex I subunit 4L family. NDH is composed of at least 16 different subunits, 5 of which are encoded in the nucleus.

Its subcellular location is the plastid. The protein resides in the chloroplast thylakoid membrane. The catalysed reaction is a plastoquinone + NADH + (n+1) H(+)(in) = a plastoquinol + NAD(+) + n H(+)(out). It catalyses the reaction a plastoquinone + NADPH + (n+1) H(+)(in) = a plastoquinol + NADP(+) + n H(+)(out). In terms of biological role, NDH shuttles electrons from NAD(P)H:plastoquinone, via FMN and iron-sulfur (Fe-S) centers, to quinones in the photosynthetic chain and possibly in a chloroplast respiratory chain. The immediate electron acceptor for the enzyme in this species is believed to be plastoquinone. Couples the redox reaction to proton translocation, and thus conserves the redox energy in a proton gradient. In Mesostigma viride (Green alga), this protein is NAD(P)H-quinone oxidoreductase subunit 4L, chloroplastic.